Here is a 510-residue protein sequence, read N- to C-terminus: 3,4-dihydroxyphenylacetaldehyde synthase (510 aa).

Residue N192 is part of the active site. Residue K303 is modified to N6-(pyridoxal phosphate)lysine.

It belongs to the group II decarboxylase family. The cofactor is pyridoxal 5'-phosphate.

The catalysed reaction is L-dopa + O2 + H2O + H(+) = 3,4-dihydroxyphenylacetaldehyde + H2O2 + NH4(+) + CO2. Functionally, catalyzes the decarboxylation-oxidative deamination of L-3,4-dihydroxyphenylalanine (L-DOPA) to 3,4-dihydroxylphenylacetaldehyde (DHPAA). Involved in cuticle development. Probably responsible for the protein cross-linking during the development of flexible cuticles. In Drosophila melanogaster (Fruit fly), this protein is 3,4-dihydroxyphenylacetaldehyde synthase (amd).